The chain runs to 529 residues: Isoleucine--tRNA ligase (529 aa).

L-isoleucyl-5'-AMP is bound at residue Glu-482. The short motif at 523-527 (KMSKS) is the 'KMSKS' region element. Lys-526 is a binding site for ATP.

Belongs to the class-I aminoacyl-tRNA synthetase family. IleS type 1 subfamily. Monomer.

It localises to the cytoplasm. The enzyme catalyses tRNA(Ile) + L-isoleucine + ATP = L-isoleucyl-tRNA(Ile) + AMP + diphosphate. Catalyzes the attachment of isoleucine to tRNA(Ile). As IleRS can inadvertently accommodate and process structurally similar amino acids such as valine, to avoid such errors it has two additional distinct tRNA(Ile)-dependent editing activities. One activity is designated as 'pretransfer' editing and involves the hydrolysis of activated Val-AMP. The other activity is designated 'posttransfer' editing and involves deacylation of mischarged Val-tRNA(Ile). This Aquifex pyrophilus protein is Isoleucine--tRNA ligase (ileS).